The following is a 142-amino-acid chain: MAIERTFSIVKPDAVSKNLIGAIYNRFESAGLKVIAAKMLHMSSEQAAGFYAEHQGKPFYDGLVSFMTSGPVMVQVLEGEDAIRRHREIMGATNPKEALAGTLRACYAESIDRNAVHGSDAPASAAREIAYFFSDDEICPRG.

6 residues coordinate ATP: Lys11, Phe59, Arg87, Thr93, Arg104, and Asn114. His117 functions as the Pros-phosphohistidine intermediate in the catalytic mechanism.

The protein belongs to the NDK family. As to quaternary structure, homotetramer. The cofactor is Mg(2+).

Its subcellular location is the cytoplasm. The enzyme catalyses a 2'-deoxyribonucleoside 5'-diphosphate + ATP = a 2'-deoxyribonucleoside 5'-triphosphate + ADP. It catalyses the reaction a ribonucleoside 5'-diphosphate + ATP = a ribonucleoside 5'-triphosphate + ADP. In terms of biological role, major role in the synthesis of nucleoside triphosphates other than ATP. The ATP gamma phosphate is transferred to the NDP beta phosphate via a ping-pong mechanism, using a phosphorylated active-site intermediate. This is Nucleoside diphosphate kinase from Aeromonas salmonicida (strain A449).